A 446-amino-acid polypeptide reads, in one-letter code: Hercynine oxygenase (446 aa).

Position 51 (His51) interacts with Fe cation. Residue 87-90 (RASR) coordinates gamma-L-glutamyl-L-cysteine. Positions 134 and 138 each coordinate Fe cation. Asp416 and Arg420 together coordinate gamma-L-glutamyl-L-cysteine.

The protein belongs to the EgtB family. Monomer. Requires Fe(2+) as cofactor.

The enzyme catalyses gamma-L-glutamyl-L-cysteine + hercynine + O2 = gamma-L-glutamyl-hercynylcysteine S-oxide + H2O. It functions in the pathway amino-acid biosynthesis; ergothioneine biosynthesis. Its function is as follows. Catalyzes the oxidative sulfurization of hercynine (N-alpha,N-alpha,N-alpha-trimethyl-L-histidine) into hercynyl-gamma-L-glutamyl-L-cysteine sulfoxide, a step in the biosynthesis pathway of ergothioneine. This chain is Hercynine oxygenase, found in Mycolicibacterium thermoresistibile (strain ATCC 19527 / DSM 44167 / CIP 105390 / JCM 6362 / NCTC 10409 / 316) (Mycobacterium thermoresistibile).